We begin with the raw amino-acid sequence, 183 residues long: Ribulose bisphosphate carboxylase small subunit, chloroplastic 5 (183 aa).

A chloroplast-targeting transit peptide spans 1–42; the sequence is MAAAMMNKSVLLNKQCGKPAAVPKVVMSKGGFARTSAVNKNR.

It belongs to the RuBisCO small chain family. As to quaternary structure, heterohexadecamer of 8 large and 8 small subunits.

It localises to the plastid. Its subcellular location is the chloroplast. RuBisCO catalyzes two reactions: the carboxylation of D-ribulose 1,5-bisphosphate, the primary event in carbon dioxide fixation, as well as the oxidative fragmentation of the pentose substrate. Both reactions occur simultaneously and in competition at the same active site. Although the small subunit is not catalytic it is essential for maximal activity. The protein is Ribulose bisphosphate carboxylase small subunit, chloroplastic 5 of Acetabularia acetabulum (Mermaid's wine glass).